A 272-amino-acid polypeptide reads, in one-letter code: Shikimate dehydrogenase (NADP(+)) (272 aa).

Shikimate-binding positions include 14-16 and Thr61; that span reads SKS. Lys65 functions as the Proton acceptor in the catalytic mechanism. Glu77 contributes to the NADP(+) binding site. Asn86 and Asp102 together coordinate shikimate. NADP(+) contacts are provided by residues 126-130, 149-154, and Met213; these read GAGGA and NRTVSR. Residue Tyr215 coordinates shikimate. Gly237 is a binding site for NADP(+).

Belongs to the shikimate dehydrogenase family. Homodimer.

The catalysed reaction is shikimate + NADP(+) = 3-dehydroshikimate + NADPH + H(+). The protein operates within metabolic intermediate biosynthesis; chorismate biosynthesis; chorismate from D-erythrose 4-phosphate and phosphoenolpyruvate: step 4/7. Its function is as follows. Involved in the biosynthesis of the chorismate, which leads to the biosynthesis of aromatic amino acids. Catalyzes the reversible NADPH linked reduction of 3-dehydroshikimate (DHSA) to yield shikimate (SA). This chain is Shikimate dehydrogenase (NADP(+)), found in Shigella boydii serotype 18 (strain CDC 3083-94 / BS512).